A 238-amino-acid chain; its full sequence is Phosphoribosylaminoimidazole-succinocarboxamide synthase (238 aa).

The protein belongs to the SAICAR synthetase family.

It catalyses the reaction 5-amino-1-(5-phospho-D-ribosyl)imidazole-4-carboxylate + L-aspartate + ATP = (2S)-2-[5-amino-1-(5-phospho-beta-D-ribosyl)imidazole-4-carboxamido]succinate + ADP + phosphate + 2 H(+). The protein operates within purine metabolism; IMP biosynthesis via de novo pathway; 5-amino-1-(5-phospho-D-ribosyl)imidazole-4-carboxamide from 5-amino-1-(5-phospho-D-ribosyl)imidazole-4-carboxylate: step 1/2. This is Phosphoribosylaminoimidazole-succinocarboxamide synthase from Desulfitobacterium hafniense (strain DSM 10664 / DCB-2).